The chain runs to 312 residues: MSAPHNVLTKKNPRRGRFAFPRRRVRAGSIDEVVQLLRLPANIANGIHTRHKKCWNDFRGGGGGGGGSRVDGTRAFVDLYGLGYLCNRTNSTLADYLCTLFVAEAYRDACCAQPPAPFPDYNASPPDCRPPLPPQPPCKPNDSELLDRIVRQNDLILNGLNQLCLNHSNHHFELSNILNSIKLQNVNIINQLSQIFDDGVLSGLDEKLSRLIADLDGHFADFGSALDAALAQLQDSLRNDLTNINSILANLTSSLTNINSTINNLLQTLQNLGLGEVGAKLNDVQSTVDRILGVLTPEIVAAAAAAAAKRAH.

It belongs to the baculoviridae PE family.

The protein localises to the virion membrane. In terms of biological role, major component of the polyhedra envelope. The chain is Polyhedral envelope protein from Lymantria dispar multicapsid nuclear polyhedrosis virus (LdMNPV).